We begin with the raw amino-acid sequence, 679 residues long: Protein white (679 aa).

The interval 1–34 (MGQEDQEVLIRGGKATSTSAESLNNNNEQPYEQS) is disordered. A compositionally biased stretch (polar residues) spans 15 to 34 (ATSTSAESLNNNNEQPYEQS). The 249-residue stretch at 84–332 (NRVKGVFCNE…FSYIGATCPT (249 aa)) folds into the ABC transporter domain. Residue 121-128 (GSSGAGKT) participates in ATP binding. A run of 5 helical transmembrane segments spans residues 427 to 445 (LLQT…LGQQ), 457 to 477 (AIFL…ITVF), 507 to 525 (LPLF…YPLI), 534 to 555 (FFTA…GYLI), and 568 to 586 (VGPP…FLNS). 2 N-linked (GlcNAc...) asparagine glycosylation sites follow: N628 and N643. The chain crosses the membrane as a helical span at residues 651-670 (FDFIGLALLIVGFRISAYIA).

The protein belongs to the ABC transporter superfamily. ABCG family. Eye pigment precursor importer (TC 3.A.1.204) subfamily.

The protein localises to the membrane. In terms of biological role, may be part of a membrane-spanning permease system necessary for the transport of pigment precursors into pigment cells responsible for eye color. The protein is Protein white (W) of Ceratitis capitata (Mediterranean fruit fly).